Consider the following 289-residue polypeptide: Phosphoribulokinase (289 aa).

12–20 (GSSGAGTTT) is an ATP binding site.

The protein belongs to the phosphoribulokinase family.

The enzyme catalyses D-ribulose 5-phosphate + ATP = D-ribulose 1,5-bisphosphate + ADP + H(+). It functions in the pathway carbohydrate biosynthesis; Calvin cycle. In Rhizobium meliloti (strain 1021) (Ensifer meliloti), this protein is Phosphoribulokinase (cbbP).